The primary structure comprises 495 residues: 4-aminobutyrate aminotransferase (495 aa).

160–161 (GS) is a binding site for pyridoxal 5'-phosphate. Residue arginine 216 participates in substrate binding. Lysine 350 carries the post-translational modification N6-(pyridoxal phosphate)lysine. Threonine 374 contacts pyridoxal 5'-phosphate.

It belongs to the class-III pyridoxal-phosphate-dependent aminotransferase family. In terms of assembly, homodimer. The cofactor is pyridoxal 5'-phosphate.

It catalyses the reaction 4-aminobutanoate + 2-oxoglutarate = succinate semialdehyde + L-glutamate. The protein is 4-aminobutyrate aminotransferase (gabT) of Dictyostelium discoideum (Social amoeba).